The following is a 147-amino-acid chain: D-aminoacyl-tRNA deacylase (147 aa).

The short motif at 137 to 138 (GP) is the Gly-cisPro motif, important for rejection of L-amino acids element.

This sequence belongs to the DTD family. In terms of assembly, homodimer.

Its subcellular location is the cytoplasm. It catalyses the reaction glycyl-tRNA(Ala) + H2O = tRNA(Ala) + glycine + H(+). The catalysed reaction is a D-aminoacyl-tRNA + H2O = a tRNA + a D-alpha-amino acid + H(+). An aminoacyl-tRNA editing enzyme that deacylates mischarged D-aminoacyl-tRNAs. Also deacylates mischarged glycyl-tRNA(Ala), protecting cells against glycine mischarging by AlaRS. Acts via tRNA-based rather than protein-based catalysis; rejects L-amino acids rather than detecting D-amino acids in the active site. By recycling D-aminoacyl-tRNA to D-amino acids and free tRNA molecules, this enzyme counteracts the toxicity associated with the formation of D-aminoacyl-tRNA entities in vivo and helps enforce protein L-homochirality. This chain is D-aminoacyl-tRNA deacylase, found in Bacillus pumilus (strain SAFR-032).